The following is a 653-amino-acid chain: Bifunctional lysine-specific demethylase and histidyl-hydroxylase NO66 (653 aa).

A compositionally biased stretch (low complexity) spans 1–12 (MKKATTSAAAKS). Disordered regions lie at residues 1–50 (MKKA…DMLA) and 65–137 (FDDD…LERT). Positions 13-26 (QGNSKMQKNANNGT) are enriched in polar residues. Ser-44 is subject to Phosphoserine. The segment covering 72-86 (STSKKTQSGSAAAAK) has biased composition (low complexity). Ser-131 carries the post-translational modification Phosphoserine. Thr-137 is subject to Phosphothreonine. Ser-138 is subject to Phosphoserine. The segment at 184–208 (AEPTEEGNNNNDEKETETIETHKAD) is disordered. The span at 194 to 208 (NDEKETETIETHKAD) shows a compositional bias: basic and acidic residues. The region spanning 300–450 (FYSDGCSIRL…NLLETLMPMV (151 aa)) is the JmjC domain. The Fe cation site is built by His-351, Asp-353, and His-416.

It belongs to the ROX family. NO66 subfamily. It depends on Fe(2+) as a cofactor.

The protein localises to the nucleus. The catalysed reaction is N(6),N(6)-dimethyl-L-lysyl(36)-[histone H3] + 2 2-oxoglutarate + 2 O2 = L-lysyl(36)-[histone H3] + 2 formaldehyde + 2 succinate + 2 CO2. In terms of biological role, oxygenase that can act as both a histone lysine demethylase and a ribosomal histidine hydroxylase. Specifically demethylates 'Lys-4' (H3K4me) and 'Lys-36' (H3K36me) of histone H3, thereby playing a central role in histone code. The polypeptide is Bifunctional lysine-specific demethylase and histidyl-hydroxylase NO66 (Drosophila melanogaster (Fruit fly)).